Consider the following 665-residue polypeptide: LisH domain-containing protein ARMC9 (665 aa).

Positions 7-39 (HESELLGLVKEYLDFAEFEDTLKTFLKECKIKG) constitute a LisH domain. Positions 204–235 (QSNKDVLQQLHQQLVEAERRSMTYLKRYNRIQ) form a coiled coil. S582 is subject to Phosphoserine. Residues 582–603 (SDDDEDEDDEEDHDTMEADLDK) are compositionally biased toward acidic residues. Disordered stretches follow at residues 582–604 (SDDD…LDKD) and 636–665 (RRGT…GYPA).

As to quaternary structure, interacts with TOGARAM1, CCDC66, CEP104, CSPP1 and CEP290. Interacts with NDUFAF2.

The protein resides in the cytoplasm. Its subcellular location is the cytoskeleton. The protein localises to the cilium basal body. It is found in the cell projection. It localises to the cilium. The protein resides in the microtubule organizing center. Its subcellular location is the centrosome. The protein localises to the centriole. In terms of biological role, involved in ciliogenesis. It is required for appropriate acetylation and polyglutamylation of ciliary microtubules, and regulation of cilium length. Acts as a positive regulator of hedgehog (Hh)signaling. May participate in the trafficking and/or retention of GLI2 and GLI3 proteins at the ciliary tip. The protein is LisH domain-containing protein ARMC9 (ARMC9) of Bos taurus (Bovine).